A 146-amino-acid polypeptide reads, in one-letter code: Globin-1 (146 aa).

The Globin domain occupies 9 to 146; that stretch reads QLTADVKKDL…KLVAVVQAAL (138 aa). H101 is a heme b binding site.

It belongs to the globin family. As to quaternary structure, homodimer.

The protein resides in the cytoplasm. The protein is Globin-1 of Anadara broughtonii (Blood clam).